Consider the following 484-residue polypeptide: Trigger factor (484 aa).

The region spanning Gly-162–Pro-243 is the PPIase FKBP-type domain. A disordered region spans residues Asp-427–Gly-484. Residues Asp-444 to Ser-476 show a composition bias toward acidic residues.

It belongs to the FKBP-type PPIase family. Tig subfamily.

It localises to the cytoplasm. It catalyses the reaction [protein]-peptidylproline (omega=180) = [protein]-peptidylproline (omega=0). Its function is as follows. Involved in protein export. Acts as a chaperone by maintaining the newly synthesized protein in an open conformation. Functions as a peptidyl-prolyl cis-trans isomerase. This Mycobacterium ulcerans (strain Agy99) protein is Trigger factor.